A 297-amino-acid polypeptide reads, in one-letter code: tRNA dimethylallyltransferase (297 aa).

10-17 serves as a coordination point for ATP; that stretch reads GITASGKS. Position 12–17 (12–17) interacts with substrate; sequence TASGKS. The interaction with substrate tRNA stretch occupies residues 36 to 39; that stretch reads DSKQ.

It belongs to the IPP transferase family. In terms of assembly, monomer. The cofactor is Mg(2+).

The enzyme catalyses adenosine(37) in tRNA + dimethylallyl diphosphate = N(6)-dimethylallyladenosine(37) in tRNA + diphosphate. Functionally, catalyzes the transfer of a dimethylallyl group onto the adenine at position 37 in tRNAs that read codons beginning with uridine, leading to the formation of N6-(dimethylallyl)adenosine (i(6)A). This chain is tRNA dimethylallyltransferase, found in Wolbachia pipientis subsp. Culex pipiens (strain wPip).